A 494-amino-acid polypeptide reads, in one-letter code: Alpha-amylase (494 aa).

Residues 1–26 (MQISKAALLASLAALVYAQPVTLFKR) form the signal peptide. C57 and C65 form a disulfide bridge. Residue W110 coordinates substrate. Position 148 (N148) interacts with Ca(2+). Position 149 (H149) interacts with substrate. The cysteines at positions 177 and 191 are disulfide-linked. Position 202 (D202) interacts with Ca(2+). A glycan (N-linked (GlcNAc...) asparagine) is linked at N224. Residue R231 coordinates substrate. Residues D233, H237, and E257 each coordinate Ca(2+). D233 acts as the Nucleophile in catalysis. 236-237 (KH) contacts substrate. The Proton donor role is filled by E257. G261 lines the substrate pocket. C267 and C310 are oxidised to a cystine. The substrate site is built by D324 and R371. Residues C462 and C493 are joined by a disulfide bond.

It belongs to the glycosyl hydrolase 13 family. Requires Ca(2+) as cofactor.

Its subcellular location is the secreted. It carries out the reaction Endohydrolysis of (1-&gt;4)-alpha-D-glucosidic linkages in polysaccharides containing three or more (1-&gt;4)-alpha-linked D-glucose units.. This is Alpha-amylase (ALP1) from Saccharomycopsis fibuligera (Yeast).